A 388-amino-acid polypeptide reads, in one-letter code: Alpha-2A adrenergic receptor (388 aa).

Over 1 to 22 the chain is Extracellular; it reads MICGANATNGTNATKEYTLLVA. 3 N-linked (GlcNAc...) asparagine glycosylation sites follow: Asn-6, Asn-9, and Asn-12. Residues 23–48 traverse the membrane as a helical segment; the sequence is LPLSIAVGLLILLIIFGNVLVIIAVF. Topologically, residues 49–59 are cytoplasmic; that stretch reads TSRALRAPQNL. The helical transmembrane segment at 60 to 85 threads the bilayer; it reads FLVSLASADILVATLVMPFSLANELM. Residues 86–95 are Extracellular-facing; the sequence is GMWTFGGVWC. A disulfide bridge connects residues Cys-95 and Cys-169. The chain crosses the membrane as a helical span at residues 96 to 118; the sequence is EIYLALDVLFCTASITHLCAISL. The Cytoplasmic segment spans residues 119–138; the sequence is DRYWSITQAIEYNLKRTPQR. Residues 139 to 162 form a helical membrane-spanning segment; it reads IKRIIFIVWIIAAVISCPPLITMK. Over 163–173 the chain is Extracellular; sequence KSEGDICDINK. The chain crosses the membrane as a helical span at residues 174–198; sequence EKWYIVSSCIGSFFLPCIIMVLVYI. Residues 199-311 are Cytoplasmic-facing; the sequence is RIYQIAKKRT…RQNREKRFTF (113 aa). The segment at 208–291 is disordered; sequence TRAPPGDHRK…PGDGDKTEAC (84 aa). Residues 212–231 show a composition bias toward basic and acidic residues; the sequence is PGDHRKNEVGKKENDPHEKL. Basic residues predominate over residues 266–275; that stretch reads LKKKSSKGKT. A helical transmembrane segment spans residues 312–337; the sequence is VLAVVIGVFVICWFPFFFTYTFTAFC. Residues 338–344 are Extracellular-facing; it reads DCCVPET. Residues 345-368 form a helical membrane-spanning segment; sequence LFKFFFWFGYCNSSLNPIIYTIFN. The Cytoplasmic segment spans residues 369 to 388; that stretch reads NDFRRSFKKILCRRDKRRVV. Residue Cys-380 is the site of S-palmitoyl cysteine attachment.

Belongs to the G-protein coupled receptor 1 family. Adrenergic receptor subfamily. ADRA2A sub-subfamily.

The protein resides in the cell membrane. Its function is as follows. Alpha-2 adrenergic receptors mediate the catecholamine-induced inhibition of adenylate cyclase through the action of G proteins. The order of potency for this receptor is dexmedetomidine &gt; oxymetazoline = epinephrine &gt; norepinephrine. This is Alpha-2A adrenergic receptor from Danio rerio (Zebrafish).